Here is a 256-residue protein sequence, read N- to C-terminus: Large ribosomal subunit protein uL2 (256 aa).

The disordered stretch occupies residues 208-230; sequence EHPHGGGNHQHIGKASTVKRGTS.

Belongs to the universal ribosomal protein uL2 family. As to expression, in larvae tissues examined: gut, brain imaginal disk, salivary glands, fat body, muscles, epidermis and trachaea.

It is found in the cytoplasm. The protein is Large ribosomal subunit protein uL2 (RpL8) of Drosophila melanogaster (Fruit fly).